A 629-amino-acid chain; its full sequence is tRNA uridine 5-carboxymethylaminomethyl modification enzyme MnmG (629 aa).

13-18 (GGGHAG) serves as a coordination point for FAD. 273–287 (GPRYCPSIEDKIHRF) contacts NAD(+).

Belongs to the MnmG family. In terms of assembly, homodimer. Heterotetramer of two MnmE and two MnmG subunits. Requires FAD as cofactor.

The protein resides in the cytoplasm. Functionally, NAD-binding protein involved in the addition of a carboxymethylaminomethyl (cmnm) group at the wobble position (U34) of certain tRNAs, forming tRNA-cmnm(5)s(2)U34. This is tRNA uridine 5-carboxymethylaminomethyl modification enzyme MnmG from Shewanella denitrificans (strain OS217 / ATCC BAA-1090 / DSM 15013).